A 604-amino-acid chain; its full sequence is UvrABC system protein C (604 aa).

In terms of domain architecture, GIY-YIG spans 15–92 (DLPGCYLMKN…IQKHQPYFNI (78 aa)). The UVR domain maps to 197–232 (ETVKKQLTKRMDQAAADLEFERAAELRDQLNYIEMT).

This sequence belongs to the UvrC family. In terms of assembly, interacts with UvrB in an incision complex.

The protein resides in the cytoplasm. The UvrABC repair system catalyzes the recognition and processing of DNA lesions. UvrC both incises the 5' and 3' sides of the lesion. The N-terminal half is responsible for the 3' incision and the C-terminal half is responsible for the 5' incision. This chain is UvrABC system protein C, found in Lactiplantibacillus plantarum (strain ATCC BAA-793 / NCIMB 8826 / WCFS1) (Lactobacillus plantarum).